We begin with the raw amino-acid sequence, 344 residues long: Heat-inducible transcription repressor HrcA (344 aa).

The protein belongs to the HrcA family.

Its function is as follows. Negative regulator of class I heat shock genes (grpE-dnaK-dnaJ and groELS operons). Prevents heat-shock induction of these operons. The chain is Heat-inducible transcription repressor HrcA from Streptococcus pneumoniae (strain 70585).